The chain runs to 305 residues: MDMFQKVEKIGEGTYGVVYKAKNRETGQLVALKKIRLDLEMEGVPSTAIREISLLKELKHPNIVRLLDVVHNERKLYLVFEFLSQDLKKYMDSTPGSELPLHLIKSYLFQLLQGVSFCHSHRVIHRDLKPQNLLINELGAIKLADFGLARAFGVPLRTYTHEVVTLWYRAPEILLGSKFYTTAVDIWSIGCIFAEMVTRKALFPGDSEIDQLFRIFRMLGTPSEDTWPGVTQLPDYKGSFPKWTRKGLEEIVPNLEPEGRDLLMQLLQYDPSQRITAKTALAHPYFSSPEPSPAARQYVLQRFRH.

A Protein kinase domain is found at 4 to 286 (FQKVEKIGEG…AKTALAHPYF (283 aa)). ATP is bound by residues 10 to 18 (IGEGTYGVV) and lysine 33. The Proton acceptor role is filled by aspartate 127.

The protein belongs to the protein kinase superfamily. CMGC Ser/Thr protein kinase family. CDC2/CDKX subfamily. Interacts with CABLES1 and CABLES2. Interacts with ATF1. Binding to CCNC/cyclin-C promotes RB1 phosphorylation. In terms of tissue distribution, expressed in cancer cell lines and glioblastoma tissue.

It catalyses the reaction L-seryl-[protein] + ATP = O-phospho-L-seryl-[protein] + ADP + H(+). The enzyme catalyses L-threonyl-[protein] + ATP = O-phospho-L-threonyl-[protein] + ADP + H(+). Serine/threonine-protein kinase that plays a critical role in the control of the eukaryotic cell cycle; involved in G0-G1 and G1-S cell cycle transitions. Interacts with CCNC/cyclin-C during interphase. Phosphorylates histone H1, ATF1, RB1 and CABLES1. ATF1 phosphorylation triggers ATF1 transactivation and transcriptional activities, and promotes cell proliferation and transformation. CDK3/cyclin-C mediated RB1 phosphorylation is required for G0-G1 transition. Promotes G1-S transition probably by contributing to the activation of E2F1, E2F2 and E2F3 in a RB1-independent manner. In Homo sapiens (Human), this protein is Cyclin-dependent kinase 3 (CDK3).